The following is a 340-amino-acid chain: GTP 3',8-cyclase (340 aa).

A Radical SAM core domain is found at 20-246; sequence RFERQYVYLR…PKALSDGPAK (227 aa). Residue R29 participates in GTP binding. [4Fe-4S] cluster is bound by residues C36 and C40. Y42 is a binding site for S-adenosyl-L-methionine. Residue C43 participates in [4Fe-4S] cluster binding. R79 is a binding site for GTP. G83 provides a ligand contact to S-adenosyl-L-methionine. T110 is a GTP binding site. S134 contributes to the S-adenosyl-L-methionine binding site. A GTP-binding site is contributed by K171. M205 serves as a coordination point for S-adenosyl-L-methionine. 2 residues coordinate [4Fe-4S] cluster: C268 and C271. A GTP-binding site is contributed by 273–275; sequence RLR. [4Fe-4S] cluster is bound at residue C285.

This sequence belongs to the radical SAM superfamily. MoaA family. As to quaternary structure, monomer and homodimer. [4Fe-4S] cluster serves as cofactor.

The catalysed reaction is GTP + AH2 + S-adenosyl-L-methionine = (8S)-3',8-cyclo-7,8-dihydroguanosine 5'-triphosphate + 5'-deoxyadenosine + L-methionine + A + H(+). Its pathway is cofactor biosynthesis; molybdopterin biosynthesis. Catalyzes the cyclization of GTP to (8S)-3',8-cyclo-7,8-dihydroguanosine 5'-triphosphate. The sequence is that of GTP 3',8-cyclase from Actinobacillus pleuropneumoniae serotype 7 (strain AP76).